The chain runs to 374 residues: Chaperone protein DnaJ (374 aa).

One can recognise a J domain in the interval 5–70 (DYYEVLGVAK…QKRAAYDRYG (66 aa)). The segment at 134-212 (GFDTEIRVPS…CDGVGRIRRN (79 aa)) adopts a CR-type zinc-finger fold. Cys147, Cys150, Cys164, Cys167, Cys186, Cys189, Cys200, and Cys203 together coordinate Zn(2+). 4 CXXCXGXG motif repeats span residues 147 to 154 (CDTCHGSG), 164 to 171 (CRTCGGSG), 186 to 193 (CPTCHGTG), and 200 to 207 (CPSCDGVG).

This sequence belongs to the DnaJ family. In terms of assembly, homodimer. The cofactor is Zn(2+).

It localises to the cytoplasm. In terms of biological role, participates actively in the response to hyperosmotic and heat shock by preventing the aggregation of stress-denatured proteins and by disaggregating proteins, also in an autonomous, DnaK-independent fashion. Unfolded proteins bind initially to DnaJ; upon interaction with the DnaJ-bound protein, DnaK hydrolyzes its bound ATP, resulting in the formation of a stable complex. GrpE releases ADP from DnaK; ATP binding to DnaK triggers the release of the substrate protein, thus completing the reaction cycle. Several rounds of ATP-dependent interactions between DnaJ, DnaK and GrpE are required for fully efficient folding. Also involved, together with DnaK and GrpE, in the DNA replication of plasmids through activation of initiation proteins. The chain is Chaperone protein DnaJ from Bordetella petrii (strain ATCC BAA-461 / DSM 12804 / CCUG 43448).